The sequence spans 461 residues: Kynurenine 3-monooxygenase (461 aa).

FAD contacts are provided by residues 17-18 (LA), 37-39 (ERR), and Ala-56. 2 residues coordinate L-kynurenine: Arg-84 and Tyr-98. FAD-binding positions include Arg-111, Leu-135, Asp-311, and 324 to 325 (MN). Positions 369 and 404 each coordinate L-kynurenine.

This sequence belongs to the aromatic-ring hydroxylase family. KMO subfamily. FAD is required as a cofactor.

It carries out the reaction L-kynurenine + NADPH + O2 + H(+) = 3-hydroxy-L-kynurenine + NADP(+) + H2O. It participates in cofactor biosynthesis; NAD(+) biosynthesis; quinolinate from L-kynurenine: step 1/3. It functions in the pathway siderophore biosynthesis; quinolobactin biosynthesis. Its function is as follows. Catalyzes the hydroxylation of L-kynurenine (L-Kyn) to form 3-hydroxy-L-kynurenine (L-3OHKyn). Probably required for the synthesis of quinolinic acid and the siderophore quinolobactin. The polypeptide is Kynurenine 3-monooxygenase (Pseudomonas fluorescens).